A 170-amino-acid polypeptide reads, in one-letter code: Small ribosomal subunit protein bS18c (170 aa).

Disordered regions lie at residues 1–59 (MYIS…IGPG) and 151–170 (NLRN…SSDC). Repeats lie at residues 4-10 (SKQPFRK), 11-17 (SKQPFRK), 18-24 (SKQTFHK), 25-31 (SKQPFRK), 32-38 (FKQPFRK), 39-45 (SKQPFRK), and 46-52 (SKQPFRR). Residues 4-52 (SKQPFRKSKQPFRKSKQTFHKSKQPFRKFKQPFRKSKQPFRKSKQPFRR) are 7 X 7 AA tandem repeats. The span at 7–55 (PFRKSKQPFRKSKQTFHKSKQPFRKFKQPFRKSKQPFRKSKQPFRRRSR) shows a compositional bias: basic residues.

It belongs to the bacterial ribosomal protein bS18 family. As to quaternary structure, part of the 30S ribosomal subunit.

Its subcellular location is the plastid. It is found in the chloroplast. The polypeptide is Small ribosomal subunit protein bS18c (rps18) (Zea mays (Maize)).